A 631-amino-acid chain; its full sequence is DNA mismatch repair protein MutL (631 aa).

The segment at 389–423 (GEREASRQAGGQRVQETQMSSYGSGQSGGRGRSYA) is disordered.

It belongs to the DNA mismatch repair MutL/HexB family.

Functionally, this protein is involved in the repair of mismatches in DNA. It is required for dam-dependent methyl-directed DNA mismatch repair. May act as a 'molecular matchmaker', a protein that promotes the formation of a stable complex between two or more DNA-binding proteins in an ATP-dependent manner without itself being part of a final effector complex. The polypeptide is DNA mismatch repair protein MutL (Shewanella loihica (strain ATCC BAA-1088 / PV-4)).